The primary structure comprises 38 residues: Mu-agatoxin-Hc1b (38 aa).

4 disulfides stabilise this stretch: C3–C19, C10–C24, C18–C34, and C26–C32. At S38 the chain carries Serine amide.

This sequence belongs to the neurotoxin 07 (Beta/delta-agtx) family. 02 (aga-3) subfamily. Expressed by the venom gland.

The protein resides in the secreted. Its function is as follows. Insecticidal neurotoxin that induces irreversible neuromuscular blockade in house crickets (A.domesticus). Modifies presynaptic voltage-gated sodium channels (Nav), causing them to open at the normal resting potential of the nerve. This leads to spontaneous release of neurotransmitter and repetitive action potentials in motor neurons. This is Mu-agatoxin-Hc1b from Hololena curta (Funnel-web spider).